We begin with the raw amino-acid sequence, 152 residues long: MSTINTDTNKTMPHISVNAQYIKDLSLENPSAPSSLAALDQRPQIDLSLDINITNLSEENFYEVELNIEAIARNEKYKLFQIELKYAGVFNLINIDSEQHPVLLSVHCPAMIFPFARKIIASCTQDAGFQPLMIDPIDFGALYHKKMSEHQN.

Belongs to the SecB family. Homotetramer, a dimer of dimers. One homotetramer interacts with 1 SecA dimer.

It is found in the cytoplasm. Functionally, one of the proteins required for the normal export of preproteins out of the cell cytoplasm. It is a molecular chaperone that binds to a subset of precursor proteins, maintaining them in a translocation-competent state. It also specifically binds to its receptor SecA. The chain is Protein-export protein SecB from Rickettsia peacockii (strain Rustic).